Here is a 449-residue protein sequence, read N- to C-terminus: MASTLTTGLPPGPRLPRYLQSVLYLRFREWFLPAMHRKYGDVFSLRVPPYADNLVVYTRPEHIKEIFAADPRSLHAGEGNHILGFVMGEHSVLMTDEAEHARMRSLLMPAFTRAALRGYRDMIASVAREHITRWRPHATINSLDHMNALTLDIILRVVFGVTDPKVKAELTSRLQQIINIHPAILAGVPYPSLKRMNPWKRFFHNQTKIDEILYREIASRRIDSDLTARTDVLSRLLQTKDTPTKPLTDAELRDQLITLLLAGHETTAAALSWTLWELAHAPEIQSQVVWAAVGGDDGFLEAVLKEGMRRHTVIASTARKVTAPAEIGGWRLPAGTVVNTSILLAHASEVSHPKPTEFRPSRFLDGSVAPNTWLPFGGGVRRCLGFGFALTEGAVILQEIFRRFTITAAGPSKGETPLVRNITTVPKHGAHLRLIPQRRLGGLGDSDPP.

Cys383 contributes to the heme binding site.

This sequence belongs to the cytochrome P450 family. Heme serves as cofactor.

The sequence is that of Putative cytochrome P450 135A1 (cyp135A1) from Mycobacterium tuberculosis (strain CDC 1551 / Oshkosh).